A 965-amino-acid chain; its full sequence is Phosphoenolpyruvate carboxylase (965 aa).

Position 11 is a phosphoserine (S11). Residues H173 and K601 contribute to the active site.

Belongs to the PEPCase type 1 family. Homotetramer. Requires Mg(2+) as cofactor.

The protein localises to the cytoplasm. The enzyme catalyses oxaloacetate + phosphate = phosphoenolpyruvate + hydrogencarbonate. The protein operates within photosynthesis; C3 acid pathway. By light-reversible phosphorylation. Functionally, through the carboxylation of phosphoenolpyruvate (PEP) it forms oxaloacetate, a four-carbon dicarboxylic acid source for the tricarboxylic acid cycle. The protein is Phosphoenolpyruvate carboxylase (PPC1) of Solanum tuberosum (Potato).